The sequence spans 330 residues: ADP-L-glycero-D-manno-heptose-6-epimerase (330 aa).

Residues 11-12, 32-33, Lys-39, Lys-54, 75-79, and Asn-92 contribute to the NADP(+) site; these read FI, DN, and EGACS. The active-site Proton acceptor is the Tyr-139. An NADP(+)-binding site is contributed by Lys-143. Asn-168 lines the substrate pocket. Positions 169 and 177 each coordinate NADP(+). The active-site Proton acceptor is Lys-177. Residues Arg-179, His-186, 200–203, Arg-213, and Tyr-292 contribute to the substrate site; that span reads FGEY.

The protein belongs to the NAD(P)-dependent epimerase/dehydratase family. HldD subfamily. Homopentamer. Requires NADP(+) as cofactor.

It catalyses the reaction ADP-D-glycero-beta-D-manno-heptose = ADP-L-glycero-beta-D-manno-heptose. It functions in the pathway nucleotide-sugar biosynthesis; ADP-L-glycero-beta-D-manno-heptose biosynthesis; ADP-L-glycero-beta-D-manno-heptose from D-glycero-beta-D-manno-heptose 7-phosphate: step 4/4. Functionally, catalyzes the interconversion between ADP-D-glycero-beta-D-manno-heptose and ADP-L-glycero-beta-D-manno-heptose via an epimerization at carbon 6 of the heptose. This is ADP-L-glycero-D-manno-heptose-6-epimerase from Burkholderia ambifaria (strain ATCC BAA-244 / DSM 16087 / CCUG 44356 / LMG 19182 / AMMD) (Burkholderia cepacia (strain AMMD)).